The chain runs to 411 residues: Citrate synthase (411 aa).

Residues histidine 304 and aspartate 363 contribute to the active site.

Belongs to the citrate synthase family.

The enzyme catalyses oxaloacetate + acetyl-CoA + H2O = citrate + CoA + H(+). The protein operates within carbohydrate metabolism; tricarboxylic acid cycle; isocitrate from oxaloacetate: step 1/2. The chain is Citrate synthase (gltA) from Rickettsia parkeri.